We begin with the raw amino-acid sequence, 22 residues long: Plasticin-TR (22 aa).

It belongs to the frog skin active peptide (FSAP) family. Plasticin subfamily. As to quaternary structure, exhibits a propensity to self-association and forms helical oligomers in membrane-mimetic environments. Expressed by the skin glands.

Its subcellular location is the secreted. The protein localises to the target cell membrane. Functionally, has no antimicrobial activity against Gram-negative bacterium E.coli ATCC 25922, Gram-positive bacterium S.epidermidis ATCC 12228 and against fungus C.albicans ATCC 24433 at concentrations up to 100 uM. Has an anti-inflammatory effect, since it inhibits the production of the pro-inflammatory cytokines TNF-alpha and IL-1 beta. Has high activity of stimulation of insulin release, which may protect the species from being eaten by predators by causing fatal hypoglycemia. Is not cytotoxic to cancer line cells. Does not show hemolysis on mouse erythrocytes. Adopts a mixture of alpha-helical and beta-sheet structures. The chain is Plasticin-TR from Phyllomedusa trinitatis (Trinidad leaf frog).